The following is a 340-amino-acid chain: ATP-dependent 6-phosphofructokinase (340 aa).

G11 is an ATP binding site. 21-25 contributes to the ADP binding site; sequence RAVVR. ATP is bound by residues 72–73 and 102–105; these read RY and GDGS. D103 lines the Mg(2+) pocket. 125-127 contacts substrate; sequence TID. D127 (proton acceptor) is an active-site residue. Residue R154 coordinates ADP. Substrate is bound by residues R162 and 169–171; that span reads MGR. ADP is bound by residues 185-187, K211, and 213-215; these read GAD and KNH. Residues E222, R244, and 250-253 each bind substrate; that span reads HIQR.

It belongs to the phosphofructokinase type A (PFKA) family. ATP-dependent PFK group I subfamily. Prokaryotic clade 'B1' sub-subfamily. Homotetramer. Requires Mg(2+) as cofactor.

It is found in the cytoplasm. It carries out the reaction beta-D-fructose 6-phosphate + ATP = beta-D-fructose 1,6-bisphosphate + ADP + H(+). The protein operates within carbohydrate degradation; glycolysis; D-glyceraldehyde 3-phosphate and glycerone phosphate from D-glucose: step 3/4. Its activity is regulated as follows. Allosterically activated by ADP and other diphosphonucleosides, and allosterically inhibited by phosphoenolpyruvate. Its function is as follows. Catalyzes the phosphorylation of D-fructose 6-phosphate to fructose 1,6-bisphosphate by ATP, the first committing step of glycolysis. The sequence is that of ATP-dependent 6-phosphofructokinase from Lactococcus lactis subsp. lactis (Streptococcus lactis).